A 517-amino-acid chain; its full sequence is C-22 sterol desaturase ERG5 (517 aa).

A helical transmembrane segment spans residues 21-41 (LAVAKATGSPITTLFTIIFLI). Cys-458 contributes to the heme binding site.

It belongs to the cytochrome P450 family. Heme is required as a cofactor.

Its subcellular location is the endoplasmic reticulum membrane. The catalysed reaction is 5-dehydroepisterol + NADPH + O2 + H(+) = ergosta-5,7,22,24(28)-tetraen-3beta-ol + NADP(+) + 2 H2O. The protein operates within steroid metabolism; ergosterol biosynthesis; ergosterol from zymosterol: step 4/5. In terms of biological role, C-22 sterol desaturase; part of the third module of ergosterol biosynthesis pathway that includes the late steps of the pathway. ERG5 converts 5-dehydroepisterol into ergosta-5,7,22,24(28)-tetraen-3beta-ol by forming the C-22(23) double bond in the sterol side chain. The third module or late pathway involves the ergosterol synthesis itself through consecutive reactions that mainly occur in the endoplasmic reticulum (ER) membrane. Firstly, the squalene synthase ERG9 catalyzes the condensation of 2 farnesyl pyrophosphate moieties to form squalene, which is the precursor of all steroids. Squalene synthase is crucial for balancing the incorporation of farnesyl diphosphate (FPP) into sterol and nonsterol isoprene synthesis. Secondly, the squalene epoxidase ERG1 catalyzes the stereospecific oxidation of squalene to (S)-2,3-epoxysqualene, which is considered to be a rate-limiting enzyme in steroid biosynthesis. Then, the lanosterol synthase ERG7 catalyzes the cyclization of (S)-2,3 oxidosqualene to lanosterol, a reaction that forms the sterol core. In the next steps, lanosterol is transformed to zymosterol through a complex process involving various demethylation, reduction and desaturation reactions. The lanosterol 14-alpha-demethylase ERG11 (also known as CYP51) catalyzes C14-demethylation of lanosterol to produce 4,4'-dimethyl cholesta-8,14,24-triene-3-beta-ol, which is critical for ergosterol biosynthesis. The C-14 reductase ERG24 reduces the C14=C15 double bond of 4,4-dimethyl-cholesta-8,14,24-trienol to produce 4,4-dimethyl-cholesta-8,24-dienol. 4,4-dimethyl-cholesta-8,24-dienol is substrate of the C-4 demethylation complex ERG25-ERG26-ERG27 in which ERG25 catalyzes the three-step monooxygenation required for the demethylation of 4,4-dimethyl and 4alpha-methylsterols, ERG26 catalyzes the oxidative decarboxylation that results in a reduction of the 3-beta-hydroxy group at the C-3 carbon to an oxo group, and ERG27 is responsible for the reduction of the keto group on the C-3. ERG28 has a role as a scaffold to help anchor ERG25, ERG26 and ERG27 to the endoplasmic reticulum and ERG29 regulates the activity of the iron-containing C4-methylsterol oxidase ERG25. Then, the sterol 24-C-methyltransferase ERG6 catalyzes the methyl transfer from S-adenosyl-methionine to the C-24 of zymosterol to form fecosterol. The C-8 sterol isomerase ERG2 catalyzes the reaction which results in unsaturation at C-7 in the B ring of sterols and thus converts fecosterol to episterol. The sterol-C5-desaturase ERG3 then catalyzes the introduction of a C-5 double bond in the B ring to produce 5-dehydroepisterol. The C-22 sterol desaturase ERG5 further converts 5-dehydroepisterol into ergosta-5,7,22,24(28)-tetraen-3beta-ol by forming the C-22(23) double bond in the sterol side chain. Finally, ergosta-5,7,22,24(28)-tetraen-3beta-ol is substrate of the C-24(28) sterol reductase ERG4 to produce ergosterol. The protein is C-22 sterol desaturase ERG5 of Candida albicans (strain SC5314 / ATCC MYA-2876) (Yeast).